We begin with the raw amino-acid sequence, 429 residues long: MRAELNQGLIDFLKASPTPFHATASLARRLEAAGYRRLDERDAWHTEAGGRYYVTRNDSSLIAIRLGRRSPLESGFRLVGAHTDSPCLRVKPNPEIARNGFLQLGVEVYGGALFAPWFDRDLSLAGRVTFRANGKLESRLVDFRKAIAVIPNLAIHLNRAANEGWPINAQNELPPIIAQLAPGEAADFRLLLDEQLLREHGITADVVLDYELSFYDTQSAAVIGLNDEFIAGARLDNLLSCHAGLEALLNAEGDENCILVCTDHEEVGSCSHCGADGPFLEQVLRRLLPEGDAFSRAIQRSLLVSADNAHGVHPNYADRHDANHGPALNGGPVIKINSNQRYATNSETAGFFRHLCQDSEVPVQSFVTRSDMGCGSTIGPITASQVGVRTVDIGLPTFAMHSIRELAGSHDLAHLVKVLGAFYASSELP.

His82, His156, and His401 together coordinate Zn(2+).

It belongs to the peptidase M18 family. Zn(2+) serves as cofactor.

The chain is Probable M18 family aminopeptidase 2 from Pseudomonas paraeruginosa (strain DSM 24068 / PA7) (Pseudomonas aeruginosa (strain PA7)).